Here is a 443-residue protein sequence, read N- to C-terminus: ATP-dependent protease ATPase subunit HslU (443 aa).

Residues Ile18, 60–65 (GVGKTE), Asp256, Glu321, and Arg393 contribute to the ATP site.

The protein belongs to the ClpX chaperone family. HslU subfamily. As to quaternary structure, a double ring-shaped homohexamer of HslV is capped on each side by a ring-shaped HslU homohexamer. The assembly of the HslU/HslV complex is dependent on binding of ATP.

It localises to the cytoplasm. In terms of biological role, ATPase subunit of a proteasome-like degradation complex; this subunit has chaperone activity. The binding of ATP and its subsequent hydrolysis by HslU are essential for unfolding of protein substrates subsequently hydrolyzed by HslV. HslU recognizes the N-terminal part of its protein substrates and unfolds these before they are guided to HslV for hydrolysis. The sequence is that of ATP-dependent protease ATPase subunit HslU from Salmonella typhi.